A 368-amino-acid chain; its full sequence is Protein mab-21-like 3 (368 aa).

It belongs to the mab-21 family.

This Xenopus laevis (African clawed frog) protein is Protein mab-21-like 3 (mab21L3).